Consider the following 408-residue polypeptide: Phosphoglycerate kinase (408 aa).

Substrate-binding positions include 22-24, R39, 60-63, R117, and R157; these read DIN and HQSR. Residues E332 and 358–361 each bind ATP; that span reads GGHT.

This sequence belongs to the phosphoglycerate kinase family. Monomer.

The protein resides in the cytoplasm. It catalyses the reaction (2R)-3-phosphoglycerate + ATP = (2R)-3-phospho-glyceroyl phosphate + ADP. The protein operates within carbohydrate degradation; glycolysis; pyruvate from D-glyceraldehyde 3-phosphate: step 2/5. The chain is Phosphoglycerate kinase from Thermoplasma volcanium (strain ATCC 51530 / DSM 4299 / JCM 9571 / NBRC 15438 / GSS1).